The chain runs to 464 residues: Argininosuccinate lyase (464 aa).

It belongs to the lyase 1 family. Argininosuccinate lyase subfamily.

It is found in the cytoplasm. It carries out the reaction 2-(N(omega)-L-arginino)succinate = fumarate + L-arginine. It participates in amino-acid biosynthesis; L-arginine biosynthesis; L-arginine from L-ornithine and carbamoyl phosphate: step 3/3. This Pseudomonas savastanoi pv. phaseolicola (strain 1448A / Race 6) (Pseudomonas syringae pv. phaseolicola (strain 1448A / Race 6)) protein is Argininosuccinate lyase.